Consider the following 284-residue polypeptide: 4-hydroxybenzoate octaprenyltransferase (284 aa).

7 helical membrane passes run 33–53 (VIAA…LGVF), 93–113 (IGLF…MNPL), 136–156 (HIPQ…AWAA), 159–179 (GELP…TIAY), 209–229 (LIIG…GQFY), 235–252 (YYWT…QQHL), and 264–284 (AFLN…VAFW).

Belongs to the UbiA prenyltransferase family. Requires Mg(2+) as cofactor.

The protein localises to the cell inner membrane. The enzyme catalyses all-trans-octaprenyl diphosphate + 4-hydroxybenzoate = 4-hydroxy-3-(all-trans-octaprenyl)benzoate + diphosphate. The protein operates within cofactor biosynthesis; ubiquinone biosynthesis. Catalyzes the prenylation of para-hydroxybenzoate (PHB) with an all-trans polyprenyl group. Mediates the second step in the final reaction sequence of ubiquinone-8 (UQ-8) biosynthesis, which is the condensation of the polyisoprenoid side chain with PHB, generating the first membrane-bound Q intermediate 3-octaprenyl-4-hydroxybenzoate. This chain is 4-hydroxybenzoate octaprenyltransferase, found in Vibrio parahaemolyticus serotype O3:K6 (strain RIMD 2210633).